The primary structure comprises 1765 residues: Sodium channel protein type 11 subunit alpha (1765 aa).

Residues Met1–Ser126 are Cytoplasmic-facing. The I repeat unit spans residues Phe115 to Arg406. A helical membrane pass occupies residues Val127–Asn148. N-linked (GlcNAc...) asparagine glycosylation occurs at Asn149. The Extracellular portion of the chain corresponds to Asn149–Asn159. The helical transmembrane segment at Ile160–Ala179 threads the bilayer. Over Arg180 to Arg191 the chain is Cytoplasmic. The helical transmembrane segment at Asp192–Leu211 threads the bilayer. Residues Gly212–Ser219 are Extracellular-facing. A glycan (N-linked (GlcNAc...) asparagine) is linked at Asn217. The chain crosses the membrane as a helical; Voltage-sensor span at residues Thr220 to Leu239. Over Lys240 to Asp255 the chain is Cytoplasmic. A helical membrane pass occupies residues Val256–Leu269. Over Val270–Ser342 the chain is Extracellular. Residues Cys283 and Cys320 are joined by a disulfide bond. 3 N-linked (GlcNAc...) asparagine glycosylation sites follow: Asn303, Asn327, and Asn336. Positions Phe343–Leu367 form an intramembrane region, pore-forming. Residues Arg368–Phe374 are Extracellular-facing. A helical transmembrane segment spans residues Val375–Ala400. Residues Tyr401–Thr570 lie on the Cytoplasmic side of the membrane. The segment at Arg470 to Pro490 is disordered. An II repeat occupies Cys557–Gln821. The helical transmembrane segment at Ile571–Met594 threads the bilayer. Residues Glu595–Asp605 are Extracellular-facing. Residues Ile606–Leu629 form a helical membrane-spanning segment. Residues Asp630–His637 lie on the Cytoplasmic side of the membrane. Residues Gly638–Leu659 form a helical membrane-spanning segment. At Ser660–Ser664 the chain is on the extracellular side. N-linked (GlcNAc...) asparagine glycosylation is present at Asn662. A helical; Voltage-sensor membrane pass occupies residues Phe665 to Leu684. The Cytoplasmic segment spans residues Asn685–Gly699. Residues Asn700–Ala722 traverse the membrane as a helical segment. Residues Lys723–Asp742 are Extracellular-facing. The N-linked (GlcNAc...) asparagine glycan is linked to Asn725. An intramembrane region (pore-forming) is located at residues Phe743–Trp763. At Glu764–Pro773 the chain is on the extracellular side. A disulfide bond links Cys765 and Cys775. A helical membrane pass occupies residues Leu774–Leu799. Residues Asn800–Gln1030 lie on the Cytoplasmic side of the membrane. Positions Asn850–Ala869 are disordered. The III repeat unit spans residues Asn1023–Leu1320. The chain crosses the membrane as a helical span at residues Ile1031 to Ile1053. Residues Phe1054–Lys1067 lie on the Extracellular side of the membrane. A helical membrane pass occupies residues Leu1068–Phe1093. Over Arg1094–Ser1099 the chain is Cytoplasmic. The chain crosses the membrane as a helical span at residues Ala1100–Thr1117. Position 1118 (Asn1118) is a topological domain, extracellular. The chain crosses the membrane as a helical; Voltage-sensor span at residues Leu1119–Phe1140. The Cytoplasmic segment spans residues Glu1141–Asn1159. The helical transmembrane segment at Val1160–Gly1181 threads the bilayer. The Extracellular portion of the chain corresponds to Lys1182–Val1224. Asn1188, Asn1197, Asn1203, and Asn1211 each carry an N-linked (GlcNAc...) asparagine glycan. Positions Gly1225–Ala1246 form an intramembrane region, pore-forming. Residues Ala1247–Asn1262 lie on the Extracellular side of the membrane. Residues Leu1263–Ile1289 form a helical membrane-spanning segment. Residues Asp1290–Asp1342 lie on the Cytoplasmic side of the membrane. The IV repeat unit spans residues Ile1329–Gln1619. The chain crosses the membrane as a helical span at residues Leu1343–Ala1366. Residues Glu1367–Lys1377 are Extracellular-facing. Residues Ile1378–Leu1401 traverse the membrane as a helical segment. Over Arg1402–Thr1407 the chain is Cytoplasmic. Residues Asn1408–Glu1431 traverse the membrane as a helical segment. Residues Asn1432 to Leu1440 are Extracellular-facing. The helical; Voltage-sensor transmembrane segment at Phe1441–Arg1463 threads the bilayer. The Cytoplasmic segment spans residues Thr1464–Asn1478. The helical transmembrane segment at Ile1479–Val1501 threads the bilayer. The Extracellular portion of the chain corresponds to Lys1502–Thr1515. An intramembrane region (pore-forming) is located at residues Phe1516–Pro1538. Over Met1539 to Ile1559 the chain is Extracellular. A helical membrane pass occupies residues Ala1560–Leu1584. The Cytoplasmic portion of the chain corresponds to Glu1585–Asp1765.

The protein belongs to the sodium channel (TC 1.A.1.10) family. Nav1.9/SCN11A subfamily. In terms of assembly, the voltage-resistant sodium channel consists of an ion conducting pore forming alpha-subunit regulated by one or more auxiliary subunits SCN1B, SCN2B and SCN3B. As to expression, expressed in the dorsal root ganglia (C-fiber neurons), spinal cord, trigeminal ganglia, testis, ovary, uterus and small intestine.

It is found in the cell membrane. The enzyme catalyses Na(+)(in) = Na(+)(out). In terms of biological role, sodium channel mediating the voltage-dependent sodium ion permeability of excitable membranes. Assuming opened or closed conformations in response to the voltage difference across the membrane, the protein forms a sodium-selective channel through which sodium ions may pass in accordance with their electrochemical gradient. Involved in membrane depolarization during action potential in nociceptors which function as key relay stations for the electrical transmission of pain signals from the periphery to the central nervous system. Also involved in rapid BDNF-evoked neuronal depolarization. The chain is Sodium channel protein type 11 subunit alpha from Mus musculus (Mouse).